Consider the following 302-residue polypeptide: Ethylmalonyl-CoA decarboxylase (302 aa).

It belongs to the enoyl-CoA hydratase/isomerase family.

It localises to the cytoplasm. Its subcellular location is the cytosol. The enzyme catalyses (2S)-ethylmalonyl-CoA + H(+) = butanoyl-CoA + CO2. It carries out the reaction (S)-methylmalonyl-CoA + H(+) = propanoyl-CoA + CO2. The catalysed reaction is (2R)-ethylmalonyl-CoA + H(+) = butanoyl-CoA + CO2. Its function is as follows. Decarboxylates ethylmalonyl-CoA, a potentially toxic metabolite, to form butyryl-CoA, suggesting it might be involved in metabolite proofreading. Acts preferentially on (S)-ethylmalonyl-CoA but also has some activity on the (R)-isomer. Also has methylmalonyl-CoA decarboxylase activity at lower level. The sequence is that of Ethylmalonyl-CoA decarboxylase (echdc1) from Danio rerio (Zebrafish).